We begin with the raw amino-acid sequence, 568 residues long: Urease subunit alpha (568 aa).

A Urease domain is found at glycine 130–phenylalanine 568. 3 residues coordinate Ni(2+): histidine 135, histidine 137, and lysine 218. N6-carboxylysine is present on lysine 218. Residue histidine 220 participates in substrate binding. Histidine 247 and histidine 273 together coordinate Ni(2+). Histidine 321 functions as the Proton donor in the catalytic mechanism. Aspartate 361 lines the Ni(2+) pocket.

The protein belongs to the metallo-dependent hydrolases superfamily. Urease alpha subunit family. As to quaternary structure, heterotrimer of UreA (gamma), UreB (beta) and UreC (alpha) subunits. Three heterotrimers associate to form the active enzyme. Requires Ni cation as cofactor. In terms of processing, carboxylation allows a single lysine to coordinate two nickel ions.

The protein localises to the cytoplasm. It catalyses the reaction urea + 2 H2O + H(+) = hydrogencarbonate + 2 NH4(+). Its pathway is nitrogen metabolism; urea degradation; CO(2) and NH(3) from urea (urease route): step 1/1. This Burkholderia mallei (strain NCTC 10247) protein is Urease subunit alpha.